A 303-amino-acid chain; its full sequence is MIKQRTIAQVVKAIGIGLHKGEKVTITLRPASANTGIVFRRVDLDPVVDFETTPEAVGDTQLCTCLINKDGVRLSTTEHLIAAVAAMGIDNLIVELDSSEVPIMDGSALPFIYLLQKGGIEEQNAAKRFIRIKEKVRIEEGDKWAELEPYDGFHIDFEIAFDHPAINESRQRIGLDITTKSFIEEISRARTFGFMKDIEYMHANNLALGGSMDSAVVLDEFKVLNPNGLRYSDEFVKHKILDCVGDMFMTGHNILGKVTAFKSGHDLNNKLLRKLMATESAWEWATFETPVTMPAPGLELAPA.

Positions 79, 238, and 242 each coordinate Zn(2+). The Proton donor role is filled by His-265.

This sequence belongs to the LpxC family. The cofactor is Zn(2+).

It carries out the reaction a UDP-3-O-[(3R)-3-hydroxyacyl]-N-acetyl-alpha-D-glucosamine + H2O = a UDP-3-O-[(3R)-3-hydroxyacyl]-alpha-D-glucosamine + acetate. It functions in the pathway glycolipid biosynthesis; lipid IV(A) biosynthesis; lipid IV(A) from (3R)-3-hydroxytetradecanoyl-[acyl-carrier-protein] and UDP-N-acetyl-alpha-D-glucosamine: step 2/6. Functionally, catalyzes the hydrolysis of UDP-3-O-myristoyl-N-acetylglucosamine to form UDP-3-O-myristoylglucosamine and acetate, the committed step in lipid A biosynthesis. The chain is UDP-3-O-acyl-N-acetylglucosamine deacetylase from Pseudoalteromonas translucida (strain TAC 125).